The chain runs to 388 residues: Chaperone protein DnaJ (388 aa).

A J domain is found at 5-70 (DYYTTLNISN…KKRNLYDQYG (66 aa)). The segment at 135–213 (GIKKEIRIPK…CFGQGRIKKS (79 aa)) adopts a CR-type zinc-finger fold. The Zn(2+) site is built by C148, C151, C165, C168, C187, C190, C201, and C204. CXXCXGXG motif repeat units lie at residues 148-155 (CQSCYGYG), 165-172 (CTSCNGHG), 187-194 (CSTCRGTG), and 201-208 (CKICFGQG).

The protein belongs to the DnaJ family. As to quaternary structure, homodimer. Zn(2+) serves as cofactor.

It localises to the cytoplasm. Its function is as follows. Participates actively in the response to hyperosmotic and heat shock by preventing the aggregation of stress-denatured proteins and by disaggregating proteins, also in an autonomous, DnaK-independent fashion. Unfolded proteins bind initially to DnaJ; upon interaction with the DnaJ-bound protein, DnaK hydrolyzes its bound ATP, resulting in the formation of a stable complex. GrpE releases ADP from DnaK; ATP binding to DnaK triggers the release of the substrate protein, thus completing the reaction cycle. Several rounds of ATP-dependent interactions between DnaJ, DnaK and GrpE are required for fully efficient folding. Also involved, together with DnaK and GrpE, in the DNA replication of plasmids through activation of initiation proteins. The chain is Chaperone protein DnaJ from Buchnera aphidicola subsp. Cinara cedri (strain Cc).